Here is a 93-residue protein sequence, read N- to C-terminus: NAD(P)H-quinone oxidoreductase subunit 4L, chloroplastic (93 aa).

2 helical membrane passes run 1-21 (MLEH…SGLI) and 60-80 (IFAI…LSIA).

The protein belongs to the complex I subunit 4L family. As to quaternary structure, NDH is composed of at least 16 different subunits, 5 of which are encoded in the nucleus.

Its subcellular location is the plastid. It is found in the chloroplast thylakoid membrane. It catalyses the reaction a plastoquinone + NADH + (n+1) H(+)(in) = a plastoquinol + NAD(+) + n H(+)(out). It carries out the reaction a plastoquinone + NADPH + (n+1) H(+)(in) = a plastoquinol + NADP(+) + n H(+)(out). NDH shuttles electrons from NAD(P)H:plastoquinone, via FMN and iron-sulfur (Fe-S) centers, to quinones in the photosynthetic chain and possibly in a chloroplast respiratory chain. The immediate electron acceptor for the enzyme in this species is believed to be plastoquinone. Couples the redox reaction to proton translocation, and thus conserves the redox energy in a proton gradient. The protein is NAD(P)H-quinone oxidoreductase subunit 4L, chloroplastic of Anthoceros angustus (Hornwort).